A 171-amino-acid polypeptide reads, in one-letter code: Endoribonuclease ToxN (171 aa).

The protein belongs to the ToxN/AbiQ toxin family. One ToxN monomer binds to a 36-nt-long single repeat of the ToxI RNA; this complex forms a triangular heterohexameric complex with ToxN connected by the ToxI RNA to another toxin molecule. The ToxI repeat forms a pseudoknot which occludes the toxin active site. Interaction of ToxI with ToxN partially inhibits the latter's endoribonuclease activity in vitro. The complex self-assembles in vitro with either full-length or processed single repeats; during the process the precursor is processed.

Its function is as follows. Toxic component of a type III toxin-antitoxin (TA) system. An endoribonuclease which is active independently of the ribosome, cleaving between the second and third A of AAA(U/G) sequences, although not all occurrences of this tetranucleotide are cleaved. Digests many mRNA species, including its own transcript and its cognate antitoxin RNA ToxI. ToxI has 5.5 nearly identical 36 nucleotide-long repeats (a single repeat neutralizes the toxin in vivo); a single repeat folds into a pseudoknot which binds the toxin. The ToxI precursor RNA is a preferential target in vivo and is progressively degraded to single repeat lengths as ToxN-ToxI complex self-assembly occurs. In vivo expression of ToxI antitoxin inhibits endonuclease activity of ToxN. The toxin alone inhibits growth when expressed in E.coli without causing cell lysis; this bacteriostatic effect is neutralized by cognate RNA antitoxin ToxI. Non-cognate antitoxin RNA from B.thuringiensis does not inhibit this toxin. The RNA antitoxin is less stable than the proteinaceous toxin; synthesis of ToxI in the absence of new ToxN synthesis restores growth and also detectable accumulation of the ToxN protein. Negatively regulates its own operon in complex with ToxI. The toxin-antitoxin system functions in plasmid maintenance (a plasmid addiction system). In terms of biological role, the TA system protects P.atrosepticum strain 1043 against phage phiM1 and phiA2, E.coli against some but not all coliphages and S.marcescens against some bacteriophages, causing an abortive infection (Abi phenotype). Also protects P.atrosepticum strain 1043 against phage phiTE; phage that escape Abi and grow in this bacterium have evolved a pseudo-ToxI RNA by expanding a pre-existing sequence similar to the bona fide ToxI repeats. This is Endoribonuclease ToxN from Pectobacterium atrosepticum (Erwinia carotovora subsp. atroseptica).